The chain runs to 248 residues: Probable transcriptional regulatory protein PP_1214 (248 aa).

The segment at M1 to R21 is disordered.

Belongs to the TACO1 family.

Its subcellular location is the cytoplasm. In Pseudomonas putida (strain ATCC 47054 / DSM 6125 / CFBP 8728 / NCIMB 11950 / KT2440), this protein is Probable transcriptional regulatory protein PP_1214.